Here is a 371-residue protein sequence, read N- to C-terminus: Carlactonoate CLA methyltransferase (371 aa).

Residue Y21 coordinates S-adenosyl-L-homocysteine. Q28 contributes to the (11R)-carlactonoate binding site. Positions 62, 67, 101, 102, 141, and 142 each coordinate S-adenosyl-L-homocysteine. 2 residues coordinate (11R)-carlactonoate: H162 and W163. The Mg(2+) site is built by N180, D266, Y268, and D269.

Belongs to the methyltransferase superfamily. Type-7 methyltransferase family. SABATH subfamily. Homodimer. Mg(2+) serves as cofactor.

It carries out the reaction (11R)-carlactonoate + S-adenosyl-L-methionine = (11R)-methyl carlactonoate + S-adenosyl-L-homocysteine. In terms of biological role, methyltransferase involved in the biosynthesis of strigolactone natural products, bioactive compounds promoting plant fitness and soil microbe interactions, but preventing shoot branching. Catalyzes the biosynthesis of (11R)-methyl carlactonoate (MeCLA) from (11R)-carlactonoate (CLA), downstream of MAX1; MeCLA is probably biologically active as a hormone regulating shoot branching and serves as a precursor of non-canonical strigolactones (SLs). This chain is Carlactonoate CLA methyltransferase, found in Arabidopsis thaliana (Mouse-ear cress).